Consider the following 1174-residue polypeptide: ATP-dependent DNA helicase SRS2 (1174 aa).

Residues Gln14–Ser316 enclose the UvrD-like helicase ATP-binding domain. Gly38–Lys43 serves as a coordination point for ATP. The segment at Leu222–Leu243 is leucine-zipper. Arg314 is a binding site for ATP. In terms of domain architecture, UvrD-like helicase C-terminal spans Gln317–Gly654. The tract at residues Asp676–Val704 is disordered. Ser833 carries the phosphoserine modification. Disordered stretches follow at residues Ser865 to Lys896, Asn909 to Thr973, and Glu994 to Asp1024. Polar residues-rich tracts occupy residues Asn909–Lys922 and Thr935–Ser955. Over residues His956–Thr973 the composition is skewed to basic and acidic residues. The segment covering Ser1007–Ser1023 has biased composition (low complexity).

This sequence belongs to the helicase family. UvrD subfamily.

It localises to the nucleus. The enzyme catalyses Couples ATP hydrolysis with the unwinding of duplex DNA by translocating in the 3'-5' direction.. The catalysed reaction is ATP + H2O = ADP + phosphate + H(+). Its function is as follows. ATP-dependent DNA helicase involved in DNA repair at least for UV-induced lesions. The polarity of the helicase activity was determined to be 3' to 5'. This chain is ATP-dependent DNA helicase SRS2 (SRS2), found in Saccharomyces cerevisiae (strain ATCC 204508 / S288c) (Baker's yeast).